The following is a 316-amino-acid chain: Peroxidase 67 (316 aa).

Positions Met1–Ala19 are cleaved as a signal peptide. Gln20 carries the post-translational modification Pyrrolidone carboxylic acid. 4 disulfide bridges follow: Cys30-Cys110, Cys63-Cys68, Cys116-Cys312, and Cys196-Cys221. His61 functions as the Proton acceptor in the catalytic mechanism. The Ca(2+) site is built by Asp62, Val65, Gly67, Asp69, and Ser71. A substrate-binding site is contributed by Pro159. His189 lines the heme b pocket. Thr190 is a binding site for Ca(2+). Asn205 is a glycosylation site (N-linked (GlcNAc...) asparagine). Residues Asp236, Ser239, and Asp244 each coordinate Ca(2+).

It belongs to the peroxidase family. Classical plant (class III) peroxidase subfamily. The cofactor is heme b. Ca(2+) is required as a cofactor.

Its subcellular location is the secreted. The enzyme catalyses 2 a phenolic donor + H2O2 = 2 a phenolic radical donor + 2 H2O. Removal of H(2)O(2), oxidation of toxic reductants, biosynthesis and degradation of lignin, suberization, auxin catabolism, response to environmental stresses such as wounding, pathogen attack and oxidative stress. These functions might be dependent on each isozyme/isoform in each plant tissue. This Arabidopsis thaliana (Mouse-ear cress) protein is Peroxidase 67 (PER67).